A 279-amino-acid polypeptide reads, in one-letter code: Putative pyruvate, phosphate dikinase regulatory protein (279 aa).

Gly-152–Ser-159 contacts ADP.

This sequence belongs to the pyruvate, phosphate/water dikinase regulatory protein family. PDRP subfamily.

It carries out the reaction N(tele)-phospho-L-histidyl/L-threonyl-[pyruvate, phosphate dikinase] + ADP = N(tele)-phospho-L-histidyl/O-phospho-L-threonyl-[pyruvate, phosphate dikinase] + AMP + H(+). It catalyses the reaction N(tele)-phospho-L-histidyl/O-phospho-L-threonyl-[pyruvate, phosphate dikinase] + phosphate + H(+) = N(tele)-phospho-L-histidyl/L-threonyl-[pyruvate, phosphate dikinase] + diphosphate. Functionally, bifunctional serine/threonine kinase and phosphorylase involved in the regulation of the pyruvate, phosphate dikinase (PPDK) by catalyzing its phosphorylation/dephosphorylation. The polypeptide is Putative pyruvate, phosphate dikinase regulatory protein (Anaplasma marginale (strain St. Maries)).